Here is a 288-residue protein sequence, read N- to C-terminus: uncharacterized protein (288 aa).

Residues 1–12 (MTEGRCAQHPDG) show a composition bias toward basic and acidic residues. The segment at 1–20 (MTEGRCAQHPDGLDVQDVCD) is disordered.

This sequence belongs to the class IV-like SAM-binding methyltransferase superfamily. RNA methyltransferase TrmH family.

This is an uncharacterized protein from Mycobacterium bovis (strain ATCC BAA-935 / AF2122/97).